The following is a 215-amino-acid chain: Adenylate kinase (215 aa).

10–15 (GAGKGT) is an ATP binding site. The tract at residues 30–59 (STGDIFRKNISENTPLGMEARSYMDKGLLV) is NMP. AMP contacts are provided by residues T31, R36, 57 to 59 (LLV), 85 to 88 (GFPR), and Q92. Residues 126–163 (GRRVCTSCGGSFHIKFNPPTIDGKCNLCGSDIVQRKDD) form an LID region. R127 provides a ligand contact to ATP. Residues C130 and C133 each coordinate Zn(2+). 136–137 (SF) contributes to the ATP binding site. The Zn(2+) site is built by C150 and C153. R160 and R171 together coordinate AMP. Position 199 (K199) interacts with ATP.

It belongs to the adenylate kinase family. Monomer.

It is found in the cytoplasm. It catalyses the reaction AMP + ATP = 2 ADP. Its pathway is purine metabolism; AMP biosynthesis via salvage pathway; AMP from ADP: step 1/1. In terms of biological role, catalyzes the reversible transfer of the terminal phosphate group between ATP and AMP. Plays an important role in cellular energy homeostasis and in adenine nucleotide metabolism. The polypeptide is Adenylate kinase (Clostridium botulinum (strain Alaska E43 / Type E3)).